The following is a 323-amino-acid chain: MRVIFAGTPEFARVALERLLTAGFTVPLVLTQPDRPAGRGMKLQASPVKQCALQHGIAVAQPLSLRLDGKYPEDAAAAKAAIEAAQADVMVVAAYGLILPQWVLNTPRLGCLNIHASLLPRWRGAAPIHRAIEAGDAETGVTIMQMDAGLDTGDMLLLEKTAISPADTTATLHDRLAQLGGRLIVEALEMAACGGLKPTPQPAEGVTYAHKIDKAESTIDWNQPAEVIARRVRAFDPFPGAATTLGADAIKVWSCEIDSCSRTLDAACGQILSIDADGIGVACGAGSLLRLTVLQRAGGKRLPAADFLRGFPLAPGMVLGAAP.

117–120 serves as a coordination point for (6S)-5,6,7,8-tetrahydrofolate; sequence SLLP.

It belongs to the Fmt family.

It carries out the reaction L-methionyl-tRNA(fMet) + (6R)-10-formyltetrahydrofolate = N-formyl-L-methionyl-tRNA(fMet) + (6S)-5,6,7,8-tetrahydrofolate + H(+). In terms of biological role, attaches a formyl group to the free amino group of methionyl-tRNA(fMet). The formyl group appears to play a dual role in the initiator identity of N-formylmethionyl-tRNA by promoting its recognition by IF2 and preventing the misappropriation of this tRNA by the elongation apparatus. This Acidovorax ebreus (strain TPSY) (Diaphorobacter sp. (strain TPSY)) protein is Methionyl-tRNA formyltransferase.